The primary structure comprises 417 residues: Gamma-glutamyl phosphate reductase (417 aa).

The protein belongs to the gamma-glutamyl phosphate reductase family.

It is found in the cytoplasm. The enzyme catalyses L-glutamate 5-semialdehyde + phosphate + NADP(+) = L-glutamyl 5-phosphate + NADPH + H(+). The protein operates within amino-acid biosynthesis; L-proline biosynthesis; L-glutamate 5-semialdehyde from L-glutamate: step 2/2. In terms of biological role, catalyzes the NADPH-dependent reduction of L-glutamate 5-phosphate into L-glutamate 5-semialdehyde and phosphate. The product spontaneously undergoes cyclization to form 1-pyrroline-5-carboxylate. The sequence is that of Gamma-glutamyl phosphate reductase from Pectobacterium carotovorum subsp. carotovorum (strain PC1).